We begin with the raw amino-acid sequence, 303 residues long: Probable cell division protein WhiA (303 aa).

The segment at residues 272 to 303 is a DNA-binding region (H-T-H motif); the sequence is SIQQIADSIEPPLTKSGVNHRLRKINKIADDL.

It belongs to the WhiA family.

Involved in cell division and chromosome segregation. This Streptococcus thermophilus (strain ATCC BAA-250 / LMG 18311) protein is Probable cell division protein WhiA.